The following is a 507-amino-acid chain: MESWPWMAVVVLLGLTVRWTVSLSSYSGAGKPPMFGDYEAQRHWQEITLNLPVKQWYFNSSDNNLLYWGLDYPPLTAYHSLLCAYVAKFINPDWVALHTSRGYESQAHKLFMRATVLAADLLIYVPAVLLYCYSLKEISPKRKIASALCILLYPGLILIDYGHFQYNSVSLGFALWGVLGVSWDWDLLGSLAFCLALNYKQMELYHSLPFFCFLLGKCFKKGLKGKGLALFIRIACTVLASFLLCWLPFLTEREHALQVVRRLFPVDRGLFEDKVANIWCSVNVFLKIKDTLPRHIQIAISFCFTLLSLLPACIKLTVRPSCKGFRFTLVSCALSFFLFSFQVHEKSILLVSLPVCLVLTEIPFMSTWFLLVSTFSMLPLLLKDELLLPSVVTVMAFVIACGTFFPMLENTSEEQLQLKSFAVSVRRHLPGFTFLPRIMQCLFLSSVITMVLLTILSVTLDPPQKLPDLFPVLICFVSCVNFVFFLVYFNIVIMWDSKNGRNRKKIE.

The Cytoplasmic portion of the chain corresponds to 1-2 (ME). Residues 3–23 (SWPWMAVVVLLGLTVRWTVSL) form a helical membrane-spanning segment. Over 24–114 (SSYSGAGKPP…SQAHKLFMRA (91 aa)) the chain is Lumenal. A glycan (N-linked (GlcNAc...) asparagine) is linked at asparagine 59. A helical membrane pass occupies residues 115 to 135 (TVLAADLLIYVPAVLLYCYSL). Residues 136 to 143 (KEISPKRK) are Cytoplasmic-facing. Residues 144–164 (IASALCILLYPGLILIDYGHF) traverse the membrane as a helical segment. Residues 165 to 172 (QYNSVSLG) lie on the Lumenal side of the membrane. Residues 173–193 (FALWGVLGVSWDWDLLGSLAF) form a helical membrane-spanning segment. Residues 194 to 229 (CLALNYKQMELYHSLPFFCFLLGKCFKKGLKGKGLA) lie on the Cytoplasmic side of the membrane. Residues 230–250 (LFIRIACTVLASFLLCWLPFL) traverse the membrane as a helical segment. The Lumenal segment spans residues 251–297 (TEREHALQVVRRLFPVDRGLFEDKVANIWCSVNVFLKIKDTLPRHIQ). Residues 298 to 318 (IAISFCFTLLSLLPACIKLTV) form a helical membrane-spanning segment. The Cytoplasmic segment spans residues 319 to 332 (RPSCKGFRFTLVSC). A helical transmembrane segment spans residues 333–353 (ALSFFLFSFQVHEKSILLVSL). Over 354–361 (PVCLVLTE) the chain is Lumenal. Residues 362–382 (IPFMSTWFLLVSTFSMLPLLL) traverse the membrane as a helical segment. The Cytoplasmic segment spans residues 383 to 385 (KDE). A helical membrane pass occupies residues 386 to 406 (LLLPSVVTVMAFVIACGTFFP). Residues 407–437 (MLENTSEEQLQLKSFAVSVRRHLPGFTFLPR) lie on the Lumenal side of the membrane. Residues 438–458 (IMQCLFLSSVITMVLLTILSV) form a helical membrane-spanning segment. At 459 to 468 (TLDPPQKLPD) the chain is on the cytoplasmic side. A helical membrane pass occupies residues 469 to 489 (LFPVLICFVSCVNFVFFLVYF). Topologically, residues 490-507 (NIVIMWDSKNGRNRKKIE) are lumenal.

Belongs to the ALG6/ALG8 glucosyltransferase family.

Its subcellular location is the endoplasmic reticulum membrane. The enzyme catalyses an alpha-D-Man-(1-&gt;2)-alpha-D-Man-(1-&gt;2)-alpha-D-Man-(1-&gt;3)-[alpha-D-Man-(1-&gt;2)-alpha-D-Man-(1-&gt;3)-[alpha-D-Man-(1-&gt;2)-alpha-D-Man-(1-&gt;6)]-alpha-D-Man-(1-&gt;6)]-beta-D-Man-(1-&gt;4)-beta-D-GlcNAc-(1-&gt;4)-alpha-D-GlcNAc-diphospho-di-trans,poly-cis-dolichol + a di-trans,poly-cis-dolichyl beta-D-glucosyl phosphate = an alpha-D-Glc-(1-&gt;3)-alpha-D-Man-(1-&gt;2)-alpha-D-Man-(1-&gt;2)-alpha-D-Man-(1-&gt;3)-[alpha-D-Man-(1-&gt;2)-alpha-D-Man-(1-&gt;3)-[alpha-D-Man-(1-&gt;2)-alpha-D-Man-(1-&gt;6)]-alpha-D-Man-(1-&gt;6)]-beta-D-Man-(1-&gt;4)-beta-D-GlcNAc-(1-&gt;4)-alpha-D-GlcNAc-diphospho-di-trans,poly-cis-dolichol + a di-trans,poly-cis-dolichyl phosphate + H(+). Its pathway is protein modification; protein glycosylation. Its function is as follows. Dolichyl pyrophosphate Man9GlcNAc2 alpha-1,3-glucosyltransferase that operates in the biosynthetic pathway of dolichol-linked oligosaccharides, the glycan precursors employed in protein asparagine (N)-glycosylation. The assembly of dolichol-linked oligosaccharides begins on the cytosolic side of the endoplasmic reticulum membrane and finishes in its lumen. The sequential addition of sugars to dolichol pyrophosphate produces dolichol-linked oligosaccharides containing fourteen sugars, including two GlcNAcs, nine mannoses and three glucoses. Once assembled, the oligosaccharide is transferred from the lipid to nascent proteins by oligosaccharyltransferases. In the lumen of the endoplasmic reticulum, adds the first glucose residue from dolichyl phosphate glucose (Dol-P-Glc) onto the lipid-linked oligosaccharide intermediate Man(9)GlcNAc(2)-PP-Dol to produce Glc(1)Man(9)GlcNAc(2)-PP-Dol. Glc(1)Man(9)GlcNAc(2)-PP-Dol is a substrate for ALG8, the following enzyme in the biosynthetic pathway. The polypeptide is Dolichyl pyrophosphate Man9GlcNAc2 alpha-1,3-glucosyltransferase (Mus musculus (Mouse)).